Here is a 551-residue protein sequence, read N- to C-terminus: Putative transport protein HI_0035 (551 aa).

5 helical membrane passes run 4–24, 28–48, 65–85, 95–115, and 157–177; these read IAIT…IGHW, GVGL…HFTN, FGLI…FFSS, AFAI…HKIA, and VSYA…MWLI. 2 RCK C-terminal domains span residues 191–275 and 277–360; these read RFNA…IIGH and VDAP…VIGN. A run of 6 helical transmembrane segments spans residues 370–390, 402–424, 438–458, 463–483, 492–512, and 529–549; these read MLPV…PFYI, AGGP…LYWF, IVLF…DTLV, LEWM…VGTI, YLTI…LAFA, and VYPL…VLLW.

This sequence belongs to the AAE transporter (TC 2.A.81) family. YidE subfamily.

It is found in the cell membrane. This chain is Putative transport protein HI_0035, found in Haemophilus influenzae (strain ATCC 51907 / DSM 11121 / KW20 / Rd).